The sequence spans 319 residues: Methionyl-tRNA formyltransferase (319 aa).

Residue 112–115 participates in (6S)-5,6,7,8-tetrahydrofolate binding; it reads SLLP.

This sequence belongs to the Fmt family.

The enzyme catalyses L-methionyl-tRNA(fMet) + (6R)-10-formyltetrahydrofolate = N-formyl-L-methionyl-tRNA(fMet) + (6S)-5,6,7,8-tetrahydrofolate + H(+). Attaches a formyl group to the free amino group of methionyl-tRNA(fMet). The formyl group appears to play a dual role in the initiator identity of N-formylmethionyl-tRNA by promoting its recognition by IF2 and preventing the misappropriation of this tRNA by the elongation apparatus. The sequence is that of Methionyl-tRNA formyltransferase from Pelobacter propionicus (strain DSM 2379 / NBRC 103807 / OttBd1).